The following is a 172-amino-acid chain: Large ribosomal subunit protein uL10 (172 aa).

It belongs to the universal ribosomal protein uL10 family. In terms of assembly, part of the ribosomal stalk of the 50S ribosomal subunit. The N-terminus interacts with L11 and the large rRNA to form the base of the stalk. The C-terminus forms an elongated spine to which L12 dimers bind in a sequential fashion forming a multimeric L10(L12)X complex.

Functionally, forms part of the ribosomal stalk, playing a central role in the interaction of the ribosome with GTP-bound translation factors. The chain is Large ribosomal subunit protein uL10 from Xanthobacter autotrophicus (strain ATCC BAA-1158 / Py2).